A 428-amino-acid polypeptide reads, in one-letter code: Glutamate-1-semialdehyde 2,1-aminomutase (428 aa).

Lys267 is modified (N6-(pyridoxal phosphate)lysine).

Belongs to the class-III pyridoxal-phosphate-dependent aminotransferase family. HemL subfamily. Homodimer. Requires pyridoxal 5'-phosphate as cofactor.

Its subcellular location is the cytoplasm. It carries out the reaction (S)-4-amino-5-oxopentanoate = 5-aminolevulinate. It participates in porphyrin-containing compound metabolism; protoporphyrin-IX biosynthesis; 5-aminolevulinate from L-glutamyl-tRNA(Glu): step 2/2. This chain is Glutamate-1-semialdehyde 2,1-aminomutase, found in Trichlorobacter lovleyi (strain ATCC BAA-1151 / DSM 17278 / SZ) (Geobacter lovleyi).